A 200-amino-acid polypeptide reads, in one-letter code: Methylthioribulose-1-phosphate dehydratase-like protein (200 aa).

The protein belongs to the aldolase class II family. MtnB subfamily.

The polypeptide is Methylthioribulose-1-phosphate dehydratase-like protein (Schizosaccharomyces pombe (strain 972 / ATCC 24843) (Fission yeast)).